We begin with the raw amino-acid sequence, 99 residues long: Large ribosomal subunit protein uL23 (99 aa).

This sequence belongs to the universal ribosomal protein uL23 family. Part of the 50S ribosomal subunit. Contacts protein L29, and trigger factor when it is bound to the ribosome.

Its function is as follows. One of the early assembly proteins it binds 23S rRNA. One of the proteins that surrounds the polypeptide exit tunnel on the outside of the ribosome. Forms the main docking site for trigger factor binding to the ribosome. The chain is Large ribosomal subunit protein uL23 from Xanthomonas campestris pv. campestris (strain B100).